Consider the following 486-residue polypeptide: Malonate-semialdehyde dehydrogenase (486 aa).

Residues Phe154, Lys178, Glu181, Arg182, and Ser231 each contribute to the NAD(+) site. Cys286 functions as the Nucleophile in the catalytic mechanism. Glu386 lines the NAD(+) pocket.

The protein belongs to the aldehyde dehydrogenase family. IolA subfamily. Homotetramer.

The enzyme catalyses 3-oxopropanoate + NAD(+) + CoA + H2O = hydrogencarbonate + acetyl-CoA + NADH + H(+). It catalyses the reaction 2-methyl-3-oxopropanoate + NAD(+) + CoA + H2O = propanoyl-CoA + hydrogencarbonate + NADH + H(+). The protein operates within polyol metabolism; myo-inositol degradation into acetyl-CoA; acetyl-CoA from myo-inositol: step 7/7. Its function is as follows. Catalyzes the oxidation of malonate semialdehyde (MSA) and methylmalonate semialdehyde (MMSA) into acetyl-CoA and propanoyl-CoA, respectively. Is involved in a myo-inositol catabolic pathway. Bicarbonate, and not CO2, is the end-product of the enzymatic reaction. This Bacillus cereus (strain ATCC 14579 / DSM 31 / CCUG 7414 / JCM 2152 / NBRC 15305 / NCIMB 9373 / NCTC 2599 / NRRL B-3711) protein is Malonate-semialdehyde dehydrogenase.